The sequence spans 515 residues: MTQDKEVKVVAPDVAPDQEVEINKSVKDAKHQTNDDSLLQHKKKGKKGKKSKPIVTPEHIAKVRAEREVMRKAKRDAMLAQGVDPDCPPELHFIRRPFLSLHEAEPVTGFRFKLMTYNCLAQALIRRKLFPDSGDALKWYRRSKVLLNEFKYYNSDVICLQEIDHIQFQSFWKDEFSKLGYDGQYYRNATKNHGVAIMWRRELFHQVDKMLIDYDKESSESISTRTTTNNVGLVLALKFSEKVLSNLGKKSSKKCGILIGTTHLFWHPFGTYERTRQCYIVLKKMKEFMHRVNVLQNENDGDLSHWFPFFCGDFNSQPFDTPYLSMTSKPVHYRNRAKTVIGCSTSYKFSKVRDGEEGADDEEGGNIEKYGKDQPESPVPEKFHANEEQSELVDKMAQLHNSLDMRAISLYSVGYKNVHPENAGLDNDRGEPEISNWANTWRGLLDYLFYVKKWDPQSNCQEVETLGDFEKENKVKCRGFLRMPPGNEMTKHGQPHVGEYASDHLSMVCDLELQL.

2 disordered regions span residues 1-54 (MTQD…SKPI) and 353-381 (RDGE…PVPE). Over residues 21 to 34 (EINKSVKDAKHQTN) the composition is skewed to basic and acidic residues. Basic residues predominate over residues 40 to 52 (QHKKKGKKGKKSK). The segment covering 369-381 (KYGKDQPESPVPE) has biased composition (basic and acidic residues).

This sequence belongs to the CCR4/nocturin family.

The protein localises to the cytoplasm. Its subcellular location is the nucleus. Its function is as follows. Involved in pre-rRNA processing. Required for the final stage of 3'-end maturation of 5.8S rRNA at site E. This Saccharomyces cerevisiae (strain ATCC 204508 / S288c) (Baker's yeast) protein is RNA exonuclease NGL2 (NGL2).